The primary structure comprises 317 residues: Porphobilinogen deaminase (317 aa).

Cys-245 is modified (S-(dipyrrolylmethanemethyl)cysteine).

Belongs to the HMBS family. As to quaternary structure, monomer. Dipyrromethane is required as a cofactor.

It carries out the reaction 4 porphobilinogen + H2O = hydroxymethylbilane + 4 NH4(+). Its pathway is porphyrin-containing compound metabolism; protoporphyrin-IX biosynthesis; coproporphyrinogen-III from 5-aminolevulinate: step 2/4. The protein operates within porphyrin-containing compound metabolism; chlorophyll biosynthesis. Tetrapolymerization of the monopyrrole PBG into the hydroxymethylbilane pre-uroporphyrinogen in several discrete steps. The polypeptide is Porphobilinogen deaminase (Synechococcus sp. (strain RCC307)).